Here is a 535-residue protein sequence, read N- to C-terminus: CTP synthase (535 aa).

The segment at Met-1–Leu-268 is amidoligase domain. Ser-14 is a binding site for CTP. Residue Ser-14 coordinates UTP. Ser-15–Ile-20 contacts ATP. Tyr-55 is a binding site for L-glutamine. An ATP-binding site is contributed by Asp-72. Mg(2+) contacts are provided by Asp-72 and Glu-142. CTP-binding positions include Asp-149 to Glu-151, Lys-189 to Gln-194, and Lys-225. Residues Lys-189–Gln-194 and Lys-225 each bind UTP. The 243-residue stretch at Lys-293–Lys-535 folds into the Glutamine amidotransferase type-1 domain. Gly-355 provides a ligand contact to L-glutamine. The active-site Nucleophile; for glutamine hydrolysis is Cys-382. L-glutamine contacts are provided by residues Leu-383–Gln-386, Glu-406, and Arg-464. Active-site residues include His-509 and Glu-511.

The protein belongs to the CTP synthase family. Homotetramer.

The catalysed reaction is UTP + L-glutamine + ATP + H2O = CTP + L-glutamate + ADP + phosphate + 2 H(+). The enzyme catalyses L-glutamine + H2O = L-glutamate + NH4(+). It carries out the reaction UTP + NH4(+) + ATP = CTP + ADP + phosphate + 2 H(+). Its pathway is pyrimidine metabolism; CTP biosynthesis via de novo pathway; CTP from UDP: step 2/2. Allosterically activated by GTP, when glutamine is the substrate; GTP has no effect on the reaction when ammonia is the substrate. The allosteric effector GTP functions by stabilizing the protein conformation that binds the tetrahedral intermediate(s) formed during glutamine hydrolysis. Inhibited by the product CTP, via allosteric rather than competitive inhibition. Catalyzes the ATP-dependent amination of UTP to CTP with either L-glutamine or ammonia as the source of nitrogen. Regulates intracellular CTP levels through interactions with the four ribonucleotide triphosphates. The chain is CTP synthase from Lactococcus lactis subsp. lactis (strain IL1403) (Streptococcus lactis).